Reading from the N-terminus, the 695-residue chain is MVMKFKMSKNVICYTWLSVCLSSAIPAFAVQPTLKPSDISIPAISEESQLATKRATTRLTQSHYRKIKLDDDFSEKIFDRYIKNLDFNHNTFLQSDIDELRQKYGTKLDEQLNQGDLSAAFDIYDVMMKRRYERYTYALSLLDKEPDLNGQDQIEIDREKAAAPQTEADANKLWDARVKNDIINLKLKDKKWSEIKAKLTKRYNLAIRRLTQTKADDIVQIYLNAFAREIDPHTSYLSPRTAKSFNESINLSLEGIGTTLQSEDDEISIKSLVPGAPAERSKKLHPGDKIIGVGQATGDIEDVVGWRLEDLVEKIKGKKGTKVRLEIEPAKGGKSRIITLVRDKVRIEDQAAKLTFEKVSGKNIAVIKIPSFYIGLTEDVKKLLVKLENQKAEALIVDLRENGGGALTEAVALSGLFITDGPVVQVRDAYQRIRVHEDDDATQQYKGLLFVMINRYSASASEIFAAAMQDYRRGIIIGQNTFGKGTVQQSRSLNFIYDLDQSPLGVLQYTIQKFYRVNGGSTQLKGVAADINFPEIIDAKEYGEDKEDNALAWDKIPSASYMEVGNINYIDNAVNILNEKHLARIAKDPEFVALNEELKVRNERRDRKFLSLNYKMRKAENDKDDARRLKDLNERFKREGKKALKDIDDLPKDYEAPDFFLKEAEKIAADFVIFNSDQKINQANGLSEAKTESKK.

A signal peptide spans 1 to 29 (MVMKFKMSKNVICYTWLSVCLSSAIPAFA). Positions 256-316 (IGTTLQSEDD…RLEDLVEKIK (61 aa)) constitute a PDZ domain. Active-site charge relay system residues include Ser-459, Asp-470, and Lys-484.

This sequence belongs to the peptidase S41A family.

The protein resides in the cell inner membrane. It catalyses the reaction The enzyme shows specific recognition of a C-terminal tripeptide, Xaa-Yaa-Zaa, in which Xaa is preferably Ala or Leu, Yaa is preferably Ala or Tyr, and Zaa is preferably Ala, but then cleaves at a variable distance from the C-terminus. A typical cleavage is -Ala-Ala-|-Arg-Ala-Ala-Lys-Glu-Asn-Tyr-Ala-Leu-Ala-Ala.. In terms of biological role, involved in the cleavage of a C-terminal peptide of 11 residues from the precursor form of penicillin-binding protein 3 (PBP3). May be involved in protection of the bacterium from thermal and osmotic stresses. This chain is Tail-specific protease (prc), found in Haemophilus influenzae (strain ATCC 51907 / DSM 11121 / KW20 / Rd).